A 211-amino-acid polypeptide reads, in one-letter code: LexA repressor (211 aa).

The segment at residues 29–49 (VREICTAVGLRSTSTVHSHLN) is a DNA-binding region (H-T-H motif). Active-site for autocatalytic cleavage activity residues include serine 131 and lysine 169.

This sequence belongs to the peptidase S24 family. In terms of assembly, homodimer.

It carries out the reaction Hydrolysis of Ala-|-Gly bond in repressor LexA.. Its function is as follows. Represses a number of genes involved in the response to DNA damage (SOS response), including recA and lexA. In the presence of single-stranded DNA, RecA interacts with LexA causing an autocatalytic cleavage which disrupts the DNA-binding part of LexA, leading to derepression of the SOS regulon and eventually DNA repair. This is LexA repressor from Clostridioides difficile (strain 630) (Peptoclostridium difficile).